We begin with the raw amino-acid sequence, 80 residues long: Beta-toxin KAaH2 (80 aa).

An N-terminal signal peptide occupies residues 1 to 22 (MMKLMLFSIIVILFSLIGSIHG). The region spanning 25–80 (VPGNYPLDSSDDTYLCAPLGENPSCIQICRKHGVKYGYCYAFQCWCEYLEDKNVKI) is the LCN-type CS-alpha/beta domain. Disulfide bonds link C40–C63, C49–C68, and C53–C70.

The protein belongs to the long (3 C-C) scorpion toxin superfamily. Sodium/Potassium channel inhibitor family. Expressed by the venom gland.

Its subcellular location is the secreted. Its function is as follows. Weakly inhibits the vertebrate potassium channel Kv1.1/KCNA1. This is Beta-toxin KAaH2 from Androctonus australis (Sahara scorpion).